The following is a 499-amino-acid chain: Glycerol kinase (499 aa).

T13 provides a ligand contact to ADP. Positions 13, 14, and 15 each coordinate ATP. T13 contacts sn-glycerol 3-phosphate. An ADP-binding site is contributed by R17. R83, E84, Y135, and D245 together coordinate sn-glycerol 3-phosphate. Residues R83, E84, Y135, D245, and Q246 each coordinate glycerol. Positions 267 and 310 each coordinate ADP. ATP contacts are provided by T267, G310, Q314, and G411. Residues G411 and N415 each coordinate ADP.

The protein belongs to the FGGY kinase family.

The enzyme catalyses glycerol + ATP = sn-glycerol 3-phosphate + ADP + H(+). It participates in polyol metabolism; glycerol degradation via glycerol kinase pathway; sn-glycerol 3-phosphate from glycerol: step 1/1. With respect to regulation, inhibited by fructose 1,6-bisphosphate (FBP). Functionally, key enzyme in the regulation of glycerol uptake and metabolism. Catalyzes the phosphorylation of glycerol to yield sn-glycerol 3-phosphate. The sequence is that of Glycerol kinase from Xanthomonas campestris pv. campestris (strain ATCC 33913 / DSM 3586 / NCPPB 528 / LMG 568 / P 25).